The following is a 337-amino-acid chain: uncharacterized protein (337 aa).

The segment covering serine 42–serine 66 has biased composition (low complexity). The segment at serine 42 to phenylalanine 68 is disordered. Residues phenylalanine 129–valine 304 enclose the Exonuclease domain. 3 residues coordinate Mg(2+): aspartate 133, glutamate 135, and aspartate 234. Glutamate 135 (proton acceptor) is an active-site residue. Glutamate 135 provides a ligand contact to AMP. Histidine 291 serves as the catalytic Proton acceptor. Histidine 291 contacts AMP. Aspartate 296 is a Mg(2+) binding site.

This is an uncharacterized protein from Arabidopsis thaliana (Mouse-ear cress).